A 547-amino-acid chain; its full sequence is NADH-ubiquinone oxidoreductase chain 5 (547 aa).

Helical transmembrane passes span 3-23 (ISIFLMVFLLFCVSLFLIFFV), 45-65 (YFNSIMFSLILLLVTISVLVF), 80-100 (YFMLLVFVGSMFSLIFSSGCF), 101-121 (SMLVSWDLLGISSFFLVLFYN), 132-152 (TVLTNRLGDFFLFVFFSSTIF), 198-218 (ISSLVHSSTLVTAGLVLIMNF), 227-247 (VIMIIMVVGVFTMFFSSMAAL), 264-284 (MGFSMLTVGIGLSFVSFIHLL), 319-339 (VPYFIQLQLLVTLFCLCGLVF), 352-372 (FFFSNFFMVVFACMFFFSVFL), 399-419 (VVMNFLSLLLVLFSIFFIWWM), 430-450 (FLYVDFFVPLFFVVMIMVVGF), 460-477 (FVYKFLVDFFAKGWVYGL), 485-505 (LFLGGINSLGVTFFSFTGFWS), and 512-532 (LYFNSVVIVLVLFFFLVWGCI).

It belongs to the complex I subunit 5 family.

It localises to the mitochondrion inner membrane. The enzyme catalyses a ubiquinone + NADH + 5 H(+)(in) = a ubiquinol + NAD(+) + 4 H(+)(out). In terms of biological role, core subunit of the mitochondrial membrane respiratory chain NADH dehydrogenase (Complex I) that is believed to belong to the minimal assembly required for catalysis. Complex I functions in the transfer of electrons from NADH to the respiratory chain. The immediate electron acceptor for the enzyme is believed to be ubiquinone. The sequence is that of NADH-ubiquinone oxidoreductase chain 5 (ND5) from Ascaris suum (Pig roundworm).